Consider the following 388-residue polypeptide: Chalcone synthase (388 aa).

Residue cysteine 164 is part of the active site.

This sequence belongs to the thiolase-like superfamily. Chalcone/stilbene synthases family.

The catalysed reaction is (E)-4-coumaroyl-CoA + 3 malonyl-CoA + 3 H(+) = 2',4,4',6'-tetrahydroxychalcone + 3 CO2 + 4 CoA. It participates in secondary metabolite biosynthesis; flavonoid biosynthesis. Its function is as follows. The primary product of this enzyme is 4,2',4',6'-tetrahydroxychalcone (also termed naringenin-chalcone or chalcone) which can under specific conditions spontaneously isomerize into naringenin. The protein is Chalcone synthase (CHS) of Vigna unguiculata (Cowpea).